The primary structure comprises 393 residues: Bifunctional enzyme IspD/IspF (393 aa).

The segment at 1–234 is 2-C-methyl-D-erythritol 4-phosphate cytidylyltransferase; the sequence is MTISQRTAAI…ARLAAQLGDI (234 aa). Residues 235–393 form a 2-C-methyl-D-erythritol 2,4-cyclodiphosphate synthase region; that stretch reads RTGTGYDVHA…SATIRLPWSA (159 aa). 2 residues coordinate a divalent metal cation: Asp-241 and His-243. 4-CDP-2-C-methyl-D-erythritol 2-phosphate is bound by residues 241-243 and 267-268; these read DVH and HS. His-275 is a binding site for a divalent metal cation. Residues 289–291, 365–368, Phe-372, and Arg-375 each bind 4-CDP-2-C-methyl-D-erythritol 2-phosphate; these read DIG and TTSE.

It in the N-terminal section; belongs to the IspD/TarI cytidylyltransferase family. IspD subfamily. This sequence in the C-terminal section; belongs to the IspF family. The cofactor is a divalent metal cation.

The enzyme catalyses 2-C-methyl-D-erythritol 4-phosphate + CTP + H(+) = 4-CDP-2-C-methyl-D-erythritol + diphosphate. It catalyses the reaction 4-CDP-2-C-methyl-D-erythritol 2-phosphate = 2-C-methyl-D-erythritol 2,4-cyclic diphosphate + CMP. Its pathway is isoprenoid biosynthesis; isopentenyl diphosphate biosynthesis via DXP pathway; isopentenyl diphosphate from 1-deoxy-D-xylulose 5-phosphate: step 2/6. It functions in the pathway isoprenoid biosynthesis; isopentenyl diphosphate biosynthesis via DXP pathway; isopentenyl diphosphate from 1-deoxy-D-xylulose 5-phosphate: step 4/6. Bifunctional enzyme that catalyzes the formation of 4-diphosphocytidyl-2-C-methyl-D-erythritol from CTP and 2-C-methyl-D-erythritol 4-phosphate (MEP) (IspD), and catalyzes the conversion of 4-diphosphocytidyl-2-C-methyl-D-erythritol 2-phosphate (CDP-ME2P) to 2-C-methyl-D-erythritol 2,4-cyclodiphosphate (ME-CPP) with a corresponding release of cytidine 5-monophosphate (CMP) (IspF). The protein is Bifunctional enzyme IspD/IspF of Bradyrhizobium sp. (strain BTAi1 / ATCC BAA-1182).